Consider the following 394-residue polypeptide: Probable acetyl-CoA acyltransferase (394 aa).

Cysteine 88 functions as the Acyl-thioester intermediate in the catalytic mechanism. Residues histidine 349 and cysteine 378 each act as proton acceptor in the active site.

This sequence belongs to the thiolase-like superfamily. Thiolase family.

It localises to the cytoplasm. It carries out the reaction 2 acetyl-CoA = acetoacetyl-CoA + CoA. The sequence is that of Probable acetyl-CoA acyltransferase from Staphylococcus epidermidis (strain ATCC 35984 / DSM 28319 / BCRC 17069 / CCUG 31568 / BM 3577 / RP62A).